A 76-amino-acid chain; its full sequence is ATP synthase subunit 9, mitochondrial (76 aa).

Transmembrane regions (helical) follow at residues 14-34 and 48-68; these read ISTI…AALI and FPFA…CLMV.

Belongs to the ATPase C chain family. In terms of assembly, F-type ATPases have 2 components, CF(1) - the catalytic core - and CF(0) - the membrane proton channel. CF(1) has five subunits: alpha(3), beta(3), gamma(1), delta(1), epsilon(1). CF(0) has three main subunits: a, b and c.

It is found in the mitochondrion membrane. Its function is as follows. Mitochondrial membrane ATP synthase (F(1)F(0) ATP synthase or Complex V) produces ATP from ADP in the presence of a proton gradient across the membrane which is generated by electron transport complexes of the respiratory chain. F-type ATPases consist of two structural domains, F(1) - containing the extramembraneous catalytic core and F(0) - containing the membrane proton channel, linked together by a central stalk and a peripheral stalk. During catalysis, ATP synthesis in the catalytic domain of F(1) is coupled via a rotary mechanism of the central stalk subunits to proton translocation. Part of the complex F(0) domain. A homomeric c-ring of probably 10 subunits is part of the complex rotary element. The polypeptide is ATP synthase subunit 9, mitochondrial (ATP9) (Cyberlindnera mrakii (Yeast)).